Reading from the N-terminus, the 120-residue chain is Large ribosomal subunit protein eL34z (120 aa).

The disordered stretch occupies residues 31-51 (VYQTTKKRASGPKCPVTGKRI).

This sequence belongs to the eukaryotic ribosomal protein eL34 family.

The sequence is that of Large ribosomal subunit protein eL34z (RPL34A) from Arabidopsis thaliana (Mouse-ear cress).